A 362-amino-acid polypeptide reads, in one-letter code: Chorismate synthase (362 aa).

Residue arginine 47 participates in NADP(+) binding. FMN is bound by residues 124 to 126 (RSS), glycine 286, 301 to 305 (KPTAT), and arginine 327.

It belongs to the chorismate synthase family. Homotetramer. FMNH2 is required as a cofactor.

The catalysed reaction is 5-O-(1-carboxyvinyl)-3-phosphoshikimate = chorismate + phosphate. The protein operates within metabolic intermediate biosynthesis; chorismate biosynthesis; chorismate from D-erythrose 4-phosphate and phosphoenolpyruvate: step 7/7. Catalyzes the anti-1,4-elimination of the C-3 phosphate and the C-6 proR hydrogen from 5-enolpyruvylshikimate-3-phosphate (EPSP) to yield chorismate, which is the branch point compound that serves as the starting substrate for the three terminal pathways of aromatic amino acid biosynthesis. This reaction introduces a second double bond into the aromatic ring system. The polypeptide is Chorismate synthase (Synechococcus sp. (strain ATCC 27144 / PCC 6301 / SAUG 1402/1) (Anacystis nidulans)).